The sequence spans 355 residues: MSYKLLIINPGSTSTKIGVYENEKELFEETLRHTNEEIKRYETIYDQFQFRKDVILNILKEKNFDITTLSAIVGRGGMLKPVEGGTYAVNDAMIEDLKVGVQGPHASNLGGIIAKSIGDELNIPSFIVDPVVTDELDDVARLSGVPELPRKSKFHALNQKAVAKRYGKDSGKGYENLNLIVVHMGGGVSVGAHKHGKVVDVNNALDGDGPFSPERAGTVPVGDLIKMCFSGQYTESEVYTKIVGKGGFVGYLNTNDVKGVIDKMEAGDKECEKIYKAFLYQITKTIGEMAAALNGKVDQILLTGGIAYSPTLVPDLKSNVEWIAPVTVYPGEDELLALAQGAIRVLDGEEKAKIY.

Belongs to the acetokinase family.

It is found in the cytoplasm. The catalysed reaction is butanoate + ATP = butanoyl phosphate + ADP. This Clostridium botulinum (strain Alaska E43 / Type E3) protein is Probable butyrate kinase.